We begin with the raw amino-acid sequence, 350 residues long: Putative transport protein YdbI (350 aa).

8 consecutive transmembrane segments (helical) span residues 18-38 (IFVV…LILL), 67-87 (VVIT…GFVF), 145-165 (ISTF…FLFE), 207-227 (FIIA…MHFP), 229-249 (LFGL…GVVI), 257-277 (IAYS…IFAI), 289-309 (LMSA…IFSE), and 311-331 (FFGI…LDIL).

It belongs to the autoinducer-2 exporter (AI-2E) (TC 2.A.86) family.

It localises to the cell membrane. This is Putative transport protein YdbI (ydbI) from Bacillus subtilis (strain 168).